The primary structure comprises 202 residues: Orotate phosphoribosyltransferase (202 aa).

5-phospho-alpha-D-ribose 1-diphosphate-binding positions include Lys-93 and 113–121 (EDIITTGGS). The orotate site is built by Thr-117 and Arg-145.

Belongs to the purine/pyrimidine phosphoribosyltransferase family. PyrE subfamily. In terms of assembly, homodimer. Requires Mg(2+) as cofactor.

The catalysed reaction is orotidine 5'-phosphate + diphosphate = orotate + 5-phospho-alpha-D-ribose 1-diphosphate. Its pathway is pyrimidine metabolism; UMP biosynthesis via de novo pathway; UMP from orotate: step 1/2. Its function is as follows. Catalyzes the transfer of a ribosyl phosphate group from 5-phosphoribose 1-diphosphate to orotate, leading to the formation of orotidine monophosphate (OMP). This Campylobacter jejuni subsp. jejuni serotype O:23/36 (strain 81-176) protein is Orotate phosphoribosyltransferase.